Reading from the N-terminus, the 280-residue chain is Putative pyruvate, phosphate dikinase regulatory protein (280 aa).

An ADP-binding site is contributed by 147-154; that stretch reads GASRSSKT.

This sequence belongs to the pyruvate, phosphate/water dikinase regulatory protein family. PDRP subfamily.

It catalyses the reaction N(tele)-phospho-L-histidyl/L-threonyl-[pyruvate, phosphate dikinase] + ADP = N(tele)-phospho-L-histidyl/O-phospho-L-threonyl-[pyruvate, phosphate dikinase] + AMP + H(+). The catalysed reaction is N(tele)-phospho-L-histidyl/O-phospho-L-threonyl-[pyruvate, phosphate dikinase] + phosphate + H(+) = N(tele)-phospho-L-histidyl/L-threonyl-[pyruvate, phosphate dikinase] + diphosphate. Its function is as follows. Bifunctional serine/threonine kinase and phosphorylase involved in the regulation of the pyruvate, phosphate dikinase (PPDK) by catalyzing its phosphorylation/dephosphorylation. This Pelobacter propionicus (strain DSM 2379 / NBRC 103807 / OttBd1) protein is Putative pyruvate, phosphate dikinase regulatory protein.